Consider the following 684-residue polypeptide: Probable potassium transport system protein Kup (684 aa).

12 consecutive transmembrane segments (helical) span residues 19-39 (ALLVTLGVVYGDIGTSPLYVM), 61-81 (VSLIFWTLLIITTVKYVLIAL), 104-124 (WLVLPAMVGGAALLADGMLTP), 151-171 (QVIWVTVLIITFLFFIQRFGT), 177-197 (AFGPIMFVWFTFLGVAGFIAL), 223-243 (MGLFILGSIFLATTGAEALYS), 255-275 (LSWPYVNICLVLNYFGQAVWL), 303-323 (LGAIILATLAAIIASQALISG), 352-372 (LYIPVVNTILWLACLAIIGYF), 381-401 (AYGLAITITMLMTTLLLYQYL), 407-427 (PAVVAIGTLIFFSAIETVFFI), and 433-453 (FLHGGYVTAMIAFIILAVMYV).

This sequence belongs to the HAK/KUP transporter (TC 2.A.72) family.

The protein localises to the cell membrane. It catalyses the reaction K(+)(in) + H(+)(in) = K(+)(out) + H(+)(out). Functionally, transport of potassium into the cell. Likely operates as a K(+):H(+) symporter. This chain is Probable potassium transport system protein Kup, found in Lacticaseibacillus paracasei (strain ATCC 334 / BCRC 17002 / CCUG 31169 / CIP 107868 / KCTC 3260 / NRRL B-441) (Lactobacillus paracasei).